Reading from the N-terminus, the 300-residue chain is Glutamyl-Q tRNA(Asp) synthetase (300 aa).

L-glutamate contacts are provided by residues 8 to 12 and glutamate 44; that span reads RFAPS. The 'HIGH' region motif lies at 11–21; sequence PSPTGALHAGS. Zn(2+) is bound by residues cysteine 100, cysteine 102, tyrosine 126, and cysteine 130. 2 residues coordinate L-glutamate: tyrosine 190 and arginine 208. The 'KMSKS' region signature appears at 246–250; it reads KLSKQ. Lysine 249 contributes to the ATP binding site.

This sequence belongs to the class-I aminoacyl-tRNA synthetase family. GluQ subfamily. Requires Zn(2+) as cofactor.

Catalyzes the tRNA-independent activation of glutamate in presence of ATP and the subsequent transfer of glutamate onto a tRNA(Asp). Glutamate is transferred on the 2-amino-5-(4,5-dihydroxy-2-cyclopenten-1-yl) moiety of the queuosine in the wobble position of the QUC anticodon. This is Glutamyl-Q tRNA(Asp) synthetase from Leptothrix cholodnii (strain ATCC 51168 / LMG 8142 / SP-6) (Leptothrix discophora (strain SP-6)).